A 437-amino-acid polypeptide reads, in one-letter code: GTPase Obg (437 aa).

An Obg domain is found at 2-160; sequence SMFLDTAKIS…RQLELELKIL (159 aa). Positions 161–338 constitute an OBG-type G domain; that stretch reads ADVGLVGFPS…LLEATAELLA (178 aa). GTP contacts are provided by residues 167-174, 192-196, 214-217, 284-287, and 319-321; these read GFPSVGKS, FTTIV, DLPG, NKMD, and SSL. Mg(2+) is bound by residues serine 174 and threonine 194. An OCT domain is found at 359–437; the sequence is GFAEAEKEFE…IGKFEFEFVD (79 aa).

Belongs to the TRAFAC class OBG-HflX-like GTPase superfamily. OBG GTPase family. In terms of assembly, monomer. Requires Mg(2+) as cofactor.

Its subcellular location is the cytoplasm. Its function is as follows. An essential GTPase which binds GTP, GDP and possibly (p)ppGpp with moderate affinity, with high nucleotide exchange rates and a fairly low GTP hydrolysis rate. Plays a role in control of the cell cycle, stress response, ribosome biogenesis and in those bacteria that undergo differentiation, in morphogenesis control. The chain is GTPase Obg from Streptococcus pyogenes serotype M3 (strain ATCC BAA-595 / MGAS315).